We begin with the raw amino-acid sequence, 298 residues long: tRNA dimethylallyltransferase (298 aa).

10 to 17 (GATATGKS) serves as a coordination point for ATP. Substrate is bound at residue 12 to 17 (TATGKS). The interaction with substrate tRNA stretch occupies residues 35-38 (DSRQ).

This sequence belongs to the IPP transferase family. As to quaternary structure, monomer. Mg(2+) serves as cofactor.

The catalysed reaction is adenosine(37) in tRNA + dimethylallyl diphosphate = N(6)-dimethylallyladenosine(37) in tRNA + diphosphate. Functionally, catalyzes the transfer of a dimethylallyl group onto the adenine at position 37 in tRNAs that read codons beginning with uridine, leading to the formation of N6-(dimethylallyl)adenosine (i(6)A). This chain is tRNA dimethylallyltransferase, found in Picosynechococcus sp. (strain ATCC 27264 / PCC 7002 / PR-6) (Agmenellum quadruplicatum).